A 157-amino-acid polypeptide reads, in one-letter code: Small ribosomal subunit protein uS7 (157 aa).

Belongs to the universal ribosomal protein uS7 family. In terms of assembly, part of the 30S ribosomal subunit. Contacts proteins S9 and S11.

Functionally, one of the primary rRNA binding proteins, it binds directly to 16S rRNA where it nucleates assembly of the head domain of the 30S subunit. Is located at the subunit interface close to the decoding center, probably blocks exit of the E-site tRNA. The chain is Small ribosomal subunit protein uS7 from Acidovorax ebreus (strain TPSY) (Diaphorobacter sp. (strain TPSY)).